Reading from the N-terminus, the 319-residue chain is Beta-ketoacyl-[acyl-carrier-protein] synthase III (319 aa).

Active-site residues include Cys113 and His246. An ACP-binding region spans residues 247–251 (QANLR). Asn276 is a catalytic residue.

The protein belongs to the thiolase-like superfamily. FabH family. In terms of assembly, homodimer.

It is found in the cytoplasm. The enzyme catalyses malonyl-[ACP] + acetyl-CoA + H(+) = 3-oxobutanoyl-[ACP] + CO2 + CoA. Its pathway is lipid metabolism; fatty acid biosynthesis. Its function is as follows. Catalyzes the condensation reaction of fatty acid synthesis by the addition to an acyl acceptor of two carbons from malonyl-ACP. Catalyzes the first condensation reaction which initiates fatty acid synthesis and may therefore play a role in governing the total rate of fatty acid production. Possesses both acetoacetyl-ACP synthase and acetyl transacylase activities. Its substrate specificity determines the biosynthesis of branched-chain and/or straight-chain of fatty acids. This chain is Beta-ketoacyl-[acyl-carrier-protein] synthase III, found in Laribacter hongkongensis (strain HLHK9).